A 286-amino-acid chain; its full sequence is Single myb histone 5 (286 aa).

Residues 1-61 enclose the HTH myb-type domain; it reads MGAPKQRWTS…KWRNMNVIVT (61 aa). The H-T-H motif DNA-binding region spans 28–57; the sequence is WRMILNDPELSSTLRYRSNVDLKDKWRNMN. The H15 domain occupies 122–190; it reads SHSRLDNIIM…KVNRKYRIAP (69 aa). A coiled-coil region spans residues 229-277; it reads EAAAAAAAHAVAEAEAIMAEAEAAAREAEAAEAEARAAQAFAEAAVLTL.

The protein belongs to the histone H1/H5 family. SMH subfamily. In terms of assembly, forms a homodimer and heterodimers.

The protein localises to the nucleus. It localises to the chromosome. The protein resides in the nucleolus. It is found in the telomere. In terms of biological role, binds preferentially double-stranded telomeric repeats, but may also bind to the single telomeric strand. The chain is Single myb histone 5 (SMH5) from Zea mays (Maize).